The following is a 562-amino-acid chain: Actin-related protein 8 (562 aa).

248–251 serves as a coordination point for ATP; it reads DVGD.

Belongs to the actin family. ARP8 subfamily. Component of the chromatin remodeling Ino80 complex. Exists as monomers and dimers, but the dimer is most probably the biologically relevant form required for stable interactions with histones that exploits the twofold symmetry of the nucleosome core.

It is found in the nucleus. In terms of biological role, plays an important role in the functional organization of mitotic chromosomes. Exhibits low basal ATPase activity, and unable to polymerize. Proposed core component of the chromatin remodeling INO80 complex which is involved in transcriptional regulation, DNA replication and probably DNA repair. Strongly prefer nucleosomes and H3-H4 tetramers over H2A-H2B dimers, suggesting it may act as a nucleosome recognition module within the complex. The polypeptide is Actin-related protein 8 (Aedes aegypti (Yellowfever mosquito)).